The chain runs to 269 residues: Surfeit locus protein 4 (269 aa).

Transmembrane regions (helical) follow at residues 64-84 (FLAS…CILV), 92-112 (YACF…SILW), 157-177 (MQLG…HFDM), 179-199 (FFYI…AIGF), 203-223 (LAAL…NAFW), and 242-262 (TMSV…GVSM). A Di-lysine motif motif is present at residues 266–269 (KKEW).

It belongs to the SURF4 family.

Its subcellular location is the endoplasmic reticulum membrane. It is found in the endoplasmic reticulum-Golgi intermediate compartment membrane. It localises to the golgi apparatus membrane. Endoplasmic reticulum cargo receptor that mediates the export of lipoproteins by recruiting cargos into COPII vesicles to facilitate their secretion. Acts as a cargo receptor for lipoproteins bearing both APOB and APOA1, thereby regulating lipoprotein delivery and the maintenance of lipid homeostasis. This Gallus gallus (Chicken) protein is Surfeit locus protein 4.